Consider the following 201-residue polypeptide: Ras-related protein Rab-1B (201 aa).

At methionine 1 the chain carries N-acetylmethionine. Residues serine 17, glycine 18, valine 19, glycine 20, lysine 21, serine 22, cysteine 23, tyrosine 33, threonine 34, glutamate 35, serine 36, serine 39, and threonine 40 each contribute to the GTP site. Serine 22 contacts Mg(2+). The Switch 1 signature appears at 30 to 45; sequence DDTYTESYISTIGVDF. Threonine 40 and aspartate 63 together coordinate Mg(2+). Residues 64-83 form a switch 2 region; Required for interaction with REP1/CHM region; that stretch reads TAGQERFRTITSSYYRGAHG. The Switch 2 signature appears at 65–80; the sequence is AGQERFRTITSSYYRG. Glycine 66, asparagine 121, lysine 122, aspartate 124, serine 151, alanine 152, and lysine 153 together coordinate GTP. The tract at residues 173–201 is disordered; that stretch reads MGPGAASGGERPNLKIDSTPVKQAGGGCC. S-geranylgeranyl cysteine attachment occurs at residues cysteine 200 and cysteine 201. Cysteine 201 bears the Cysteine methyl ester mark.

This sequence belongs to the small GTPase superfamily. Rab family. In terms of assembly, interacts with MICAL1 and MICAL2. Interacts (in GTP-bound form) with MICALCL, MICAL1 and MILCAL3. Interacts with GDI1; the interaction requires the GDP-bound state. Interacts with CHM/REP1; the interaction requires the GDP-bound form and is necessary for prenylation by GGTase II. Interacts with RabGAP TBC1D20. Interacts (in GDP-bound form) with lipid phosphatase MTMR6 (via GRAM domain); the interaction regulates MTMR6 recruitment to the endoplasmic reticulum-Golgi intermediate compartment. Interacts (in GDP-bound form) with lipid phosphatase MTMR7. It depends on Mg(2+) as a cofactor. In terms of processing, prenylated; by GGTase II, only after interaction of the substrate with Rab escort protein 1 (REP1).

The protein resides in the cytoplasm. It is found in the membrane. The protein localises to the preautophagosomal structure membrane. Its subcellular location is the perinuclear region. It carries out the reaction GTP + H2O = GDP + phosphate + H(+). Its activity is regulated as follows. Regulated by guanine nucleotide exchange factors (GEFs) which promote the exchange of bound GDP for free GTP. Regulated by GTPase activating proteins (GAPs) including TBC1D20 which increases the GTP hydrolysis activity. Inhibited by GDP dissociation inhibitors (GDIs). Its function is as follows. The small GTPases Rab are key regulators of intracellular membrane trafficking, from the formation of transport vesicles to their fusion with membranes. Rabs cycle between an inactive GDP-bound form and an active GTP-bound form that is able to recruit to membranes different set of downstream effectors directly responsible for vesicle formation, movement, tethering and fusion. Plays a role in the initial events of the autophagic vacuole development which take place at specialized regions of the endoplasmic reticulum. Regulates vesicular transport between the endoplasmic reticulum and successive Golgi compartments. Required to modulate the compacted morphology of the Golgi. Promotes the recruitment of lipid phosphatase MTMR6 to the endoplasmic reticulum-Golgi intermediate compartment. This is Ras-related protein Rab-1B (RAB1B) from Bos taurus (Bovine).